A 348-amino-acid polypeptide reads, in one-letter code: GDSL esterase/lipase At4g30140 (348 aa).

The N-terminal stretch at 1 to 28 (MVEGESKALWIILATVFAVAAVAPAVHG) is a signal peptide. S40 serves as the catalytic Nucleophile. Active-site residues include D316 and H319. N342 carries an N-linked (GlcNAc...) asparagine glycan.

The protein belongs to the 'GDSL' lipolytic enzyme family.

The protein localises to the secreted. The chain is GDSL esterase/lipase At4g30140 from Arabidopsis thaliana (Mouse-ear cress).